Here is a 282-residue protein sequence, read N- to C-terminus: 4-diphosphocytidyl-2-C-methyl-D-erythritol kinase (282 aa).

Lys8 is an active-site residue. 91–101 (PVAAGLAGGST) provides a ligand contact to ATP. Residue Asp133 is part of the active site.

The protein belongs to the GHMP kinase family. IspE subfamily.

The catalysed reaction is 4-CDP-2-C-methyl-D-erythritol + ATP = 4-CDP-2-C-methyl-D-erythritol 2-phosphate + ADP + H(+). Its pathway is isoprenoid biosynthesis; isopentenyl diphosphate biosynthesis via DXP pathway; isopentenyl diphosphate from 1-deoxy-D-xylulose 5-phosphate: step 3/6. Catalyzes the phosphorylation of the position 2 hydroxy group of 4-diphosphocytidyl-2C-methyl-D-erythritol. The sequence is that of 4-diphosphocytidyl-2-C-methyl-D-erythritol kinase from Symbiobacterium thermophilum (strain DSM 24528 / JCM 14929 / IAM 14863 / T).